A 140-amino-acid chain; its full sequence is Extracellular globin-1 (140 aa).

One can recognise a Globin domain in the interval 1-140 (ECDVLERFKV…YDFIASGIKP (140 aa)). The cysteines at positions 2 and 130 are disulfide-linked. Residue histidine 93 participates in heme b binding.

Belongs to the globin family. In terms of assembly, the giant hemoglobins of worms are formed of a monomeric subunit and a disulfide-bonded trimer. This subunit is monomeric.

It localises to the secreted. This Metaphire hilgendorfi (Earthworm) protein is Extracellular globin-1.